Here is a 1098-residue protein sequence, read N- to C-terminus: MTLQELVHKAASCYMDRVAVCFDECNNQLPVYYTYKTVVNAASELSNFLLLHCDFQGIREIGLYCQPGIDLPSWILGILQVPAAYVPIEPDSPPSLSTHFMKKCNLKYILVEKKQINKFKSFHETLLNYDTFTVEHNDLVLFRLHWKNTEVNLMLNDGKEKYEKEKIKSISSEHVNEEKAEEHMDLRLKHCLAYVLHTSGTTGIPKIVRVPHKCIVPNIQHFRVLFDITQEDVLFLASPLTFDPSVVEIFLALSSGASLLIVPTSVKLLPSKLASVLFSHHRVTVLQATPTLLRRFGSQLIKSTVLSATTSLRVLALGGEAFPSLTVLRSWRGEGNKTQIFNVYGITEVSSWATIYRIPEKTLNSTLKCELPVQLGFPLLGTVVEVRDTNGFTIQEGSGQVFLGGRNRVCFLDDEVTVPLGTMRATGDFVTVKDGEIFFLGRKDSQIKRHGKRLNIELVQQVAEELQQVESCAVTWYNQEKLILFMVSKDASVKEYIFKELQKYLPSHAVPDELVLIDSLPFTSHGKIDVSELNKIYLNYINLKSENKLSGKEDLWEKLQYLWKSTLNLPEDLLRVPDESLFLNSGGDSLKSIRLLSEIEKLVGTSVPGLLEIILSSSILEIYNHILQTVVPDEDVTFRKSCATKRKLSDINQEEASGTSLHQKAIMTFTCHNEINAFVVLSRGSQILSLNSTRFLTKLGHCSSACPSDSVSQTNIQNLKGLNSPVLIGKSKDPSCVAKVSEEGKPAIGTQKMELHVRWRSDTGKCVDASPLVVIPTFDKSSTTVYIGSHSHRMKAVDFYSGKVKWEQILGDRIESSACVSKCGNFIVVGCYNGLVYVLKSNSGEKYWMFTTEDAVKSSATMDPTTGLIYIGSHDQHAYALDIYRKKCVWKSKCGGTVFSSPCLNLIPHHLYFATLGGLLLAVNPATGNVIWKHSCGKPLFSSPQCCSQYICIGCVDGNLLCFTHFGEQVWQFSTSGPIFSSPCTSPSEQKIFFGSHDCFIYCCNMKGHLQWKFETTSRVYATPFAFHNYNGSNEMLLAAASTDGKVWILESQSGQLQSVYELPGEVFSSPVVLESMLIIGCRDNYVYCLDLLGGNQK.

ATP contacts are provided by residues 198–206 (TSGTTGIPK), Asp-428, Arg-442, and Lys-527. The 78-residue stretch at 553 to 630 (EDLWEKLQYL…EIYNHILQTV (78 aa)) folds into the Carrier domain. Residue Ser-589 is modified to O-(pantetheine 4'-phosphoryl)serine. Phosphoserine is present on residues Ser-649 and Ser-724.

The protein belongs to the ATP-dependent AMP-binding enzyme family. As to expression, ubiquitously expressed in adult tissues.

Its function is as follows. Covalently binds beta-alanine in an ATP-dependent manner to form a thioester bond with its phosphopantetheine group and transfers it to an, as yet, unknown acceptor. May be required for a post-translational protein modification or for post-transcriptional modification of an RNA. The polypeptide is Beta-alanine-activating enzyme (AASDH) (Homo sapiens (Human)).